A 185-amino-acid polypeptide reads, in one-letter code: MIEDIKKDAQDRMGKCVEATKAQMAKVRTGRAHPSLLDTIQVNYYGSMTPLKQVGNVTIEDSRTLAVNVFDRSAIQAVEKAIMSSDLGLNPMSAGATIRIPLPPLTEERRRDLVKVVRAEAEQGRVAIRNVRRDANSSFKQLEKEKECTEDDVRRSEEEVQKITDLHIKKIDELLAAKEAELMEV.

It belongs to the RRF family.

It is found in the cytoplasm. Responsible for the release of ribosomes from messenger RNA at the termination of protein biosynthesis. May increase the efficiency of translation by recycling ribosomes from one round of translation to another. The sequence is that of Ribosome-recycling factor from Shewanella amazonensis (strain ATCC BAA-1098 / SB2B).